The chain runs to 252 residues: 3-deoxy-manno-octulosonate cytidylyltransferase (252 aa).

It belongs to the KdsB family.

It is found in the cytoplasm. It catalyses the reaction 3-deoxy-alpha-D-manno-oct-2-ulosonate + CTP = CMP-3-deoxy-beta-D-manno-octulosonate + diphosphate. The protein operates within nucleotide-sugar biosynthesis; CMP-3-deoxy-D-manno-octulosonate biosynthesis; CMP-3-deoxy-D-manno-octulosonate from 3-deoxy-D-manno-octulosonate and CTP: step 1/1. It participates in bacterial outer membrane biogenesis; lipopolysaccharide biosynthesis. Functionally, activates KDO (a required 8-carbon sugar) for incorporation into bacterial lipopolysaccharide in Gram-negative bacteria. This Phocaeicola vulgatus (strain ATCC 8482 / DSM 1447 / JCM 5826 / CCUG 4940 / NBRC 14291 / NCTC 11154) (Bacteroides vulgatus) protein is 3-deoxy-manno-octulosonate cytidylyltransferase.